The sequence spans 587 residues: Lipoprotein LpqB (587 aa).

An N-terminal signal peptide occupies residues 1-19 (MERLMRLTILLFLGAVLAG). The N-palmitoyl cysteine moiety is linked to residue cysteine 20. Cysteine 20 is lipidated: S-diacylglycerol cysteine.

Belongs to the LpqB lipoprotein family. As to quaternary structure, interacts with MtrB, probably extracytoplasmically.

It localises to the cell membrane. The protein resides in the secreted. It is found in the cell wall. In terms of biological role, may modulate activity of the MtrAB system in controlling homeostasis of the cell wall and cell division. This is Lipoprotein LpqB from Mycobacterium tuberculosis (strain CDC 1551 / Oshkosh).